The primary structure comprises 711 residues: Arginine decarboxylase 2 (711 aa).

K147 is modified (N6-(pyridoxal phosphate)lysine). Residue 331 to 341 (IDIGGGLGIDY) coordinates substrate. A disordered region spans residues 642–661 (MHTKGGSEGENEEEEEDDEF). The segment covering 650-661 (GENEEEEEDDEF) has biased composition (acidic residues).

It belongs to the Orn/Lys/Arg decarboxylase class-II family. SpeA subfamily. Homodimer and heterodimer with ADC1. Requires pyridoxal 5'-phosphate as cofactor. Mg(2+) serves as cofactor.

Its subcellular location is the plastid. It is found in the chloroplast. The protein resides in the cytoplasm. It localises to the cytosol. It catalyses the reaction L-arginine + H(+) = agmatine + CO2. Its pathway is amine and polyamine biosynthesis; agmatine biosynthesis; agmatine from L-arginine: step 1/1. Required for the biosynthesis of putrescine. Catalyzes the first step of polyamine (PA) biosynthesis to produce putrescine from arginine. Is a major contributor to basal arginine decarboxylase (ADC) activity and putrescine biosynthesis. Accumulation of putrescine plays a positive role in salt stress tolerance. Accumulation of putrescine plays a positive role in freezing tolerance. Production of PA is essential for normal seed development. Controls PA homeostasis which is crucial for normal plant growth and development. This Arabidopsis thaliana (Mouse-ear cress) protein is Arginine decarboxylase 2.